The chain runs to 290 residues: Fructokinase (290 aa).

Threonine 130 contacts ATP. Zn(2+) is bound by residues histidine 153, cysteine 169, histidine 172, and cysteine 175. ATP-binding positions include proline 183 and 231–235 (GVMEK).

Belongs to the ROK (NagC/XylR) family. As to quaternary structure, homodimer. It depends on Mg(2+) as a cofactor.

It carries out the reaction D-fructose + ATP = D-fructose 6-phosphate + ADP + H(+). Its activity is regulated as follows. Inactivated by EDTA. Inhibition by zinc ions (Potential). This Lactococcus lactis subsp. cremoris (Streptococcus cremoris) protein is Fructokinase (scrK).